Reading from the N-terminus, the 502-residue chain is Protein YdgA (502 aa).

The N-terminal stretch at 1 to 19 (MNKSLVAVGVIVALGVVWT) is a signal peptide.

It to E.coli YihF and H.influenzae HI_1236. As to quaternary structure, homodimer.

The protein resides in the cell inner membrane. The polypeptide is Protein YdgA (ydgA) (Escherichia coli (strain K12)).